The sequence spans 231 residues: MNDVVLSCKNVSKKYTEFKTDIAILKDVNLEIKKGEKVAILGLSGSGKTTLLNVLGGLDKCSAGEVYLMGERFDNQSVNKRAKMRNKHLGFIYQLHHLLPEFTAIENVMIPLAITKKYTKKESIKLANEILKKVGLDHRADHKPAELSGGERQRVAIARALVTNPNCILADEPTGNLDSQRSESIFALMQQLSDDFGTSFVIVTHDEKLASRMNKIYRLVDGELELVINSN.

The 225-residue stretch at 6-230 folds into the ABC transporter domain; sequence LSCKNVSKKY…DGELELVINS (225 aa). Position 42 to 49 (42 to 49) interacts with ATP; it reads GLSGSGKT.

The protein belongs to the ABC transporter superfamily. Lipoprotein translocase (TC 3.A.1.125) family. As to quaternary structure, the complex is composed of two ATP-binding proteins (LolD) and two transmembrane proteins (LolC and LolE).

Its subcellular location is the cell inner membrane. Functionally, part of the ABC transporter complex LolCDE involved in the translocation of mature outer membrane-directed lipoproteins, from the inner membrane to the periplasmic chaperone, LolA. Responsible for the formation of the LolA-lipoprotein complex in an ATP-dependent manner. The polypeptide is Lipoprotein-releasing system ATP-binding protein LolD (Francisella tularensis subsp. tularensis (strain FSC 198)).